The chain runs to 449 residues: Ribulose bisphosphate carboxylase large chain (449 aa).

The residue at position 5 (Lys-5) is an N6,N6,N6-trimethyllysine. Residues Asn-114 and Thr-164 each contribute to the substrate site. Lys-166 serves as the catalytic Proton acceptor. Substrate is bound at residue Lys-168. Mg(2+)-binding residues include Lys-192, Asp-194, and Glu-195. N6-carboxylysine is present on Lys-192. His-285 functions as the Proton acceptor in the catalytic mechanism. 3 residues coordinate substrate: Arg-286, His-318, and Ser-370.

It belongs to the RuBisCO large chain family. Type I subfamily. Heterohexadecamer of 8 large chains and 8 small chains; disulfide-linked. The disulfide link is formed within the large subunit homodimers. It depends on Mg(2+) as a cofactor. The disulfide bond which can form in the large chain dimeric partners within the hexadecamer appears to be associated with oxidative stress and protein turnover.

It localises to the plastid. The protein localises to the chloroplast. The enzyme catalyses 2 (2R)-3-phosphoglycerate + 2 H(+) = D-ribulose 1,5-bisphosphate + CO2 + H2O. It catalyses the reaction D-ribulose 1,5-bisphosphate + O2 = 2-phosphoglycolate + (2R)-3-phosphoglycerate + 2 H(+). Its function is as follows. RuBisCO catalyzes two reactions: the carboxylation of D-ribulose 1,5-bisphosphate, the primary event in carbon dioxide fixation, as well as the oxidative fragmentation of the pentose substrate in the photorespiration process. Both reactions occur simultaneously and in competition at the same active site. This is Ribulose bisphosphate carboxylase large chain from Zamioculcas zamiifolia (Aroid palm).